A 608-amino-acid chain; its full sequence is Microtubule-associated protein 70-3 (608 aa).

The interval 1–23 (MADGVEEGNAVAPRGPARRRGTV) is disordered. The stretch at 40 to 346 (DPVRVELTRL…ARSEAQLKEK (307 aa)) forms a coiled coil. Residues 224–458 (ILDKLQRQKV…HLLNRSTDAV (235 aa)) form a required for targeting to microtubules region. 2 disordered regions span residues 354-493 (LEDG…TANN) and 570-608 (DKEQEVKARRLGSSKGTGSSQVLSGSRSSSRSGLTRNYQ). Over residues 363–379 (SGSSRLPTEGKSFSNGP) the composition is skewed to polar residues. The span at 402-421 (RRSPSFHSRSSLSSSSSLVL) shows a compositional bias: low complexity. Over residues 476–493 (IENTNSNTDESNKETANN) the composition is skewed to polar residues. Residues 542-576 (LTKAMEVEAKKMRREVAAMEKEVAAMRVDKEQEVK) adopt a coiled-coil conformation. The segment covering 586 to 608 (TGSSQVLSGSRSSSRSGLTRNYQ) has biased composition (low complexity).

The protein belongs to the MAP70 family.

The protein localises to the cytoplasm. It localises to the cytoskeleton. Its function is as follows. Plant-specific protein that interact with microtubules. The sequence is that of Microtubule-associated protein 70-3 (MAP70.3) from Oryza sativa subsp. japonica (Rice).